The following is a 257-amino-acid chain: Neurotrophin-3 (257 aa).

The signal sequence occupies residues 1-18 (MSILFYVIFLAYLRGIQS). Positions 19 to 138 (TNMDQRSLPE…VLNRTSRRKR (120 aa)) are excised as a propeptide. N-linked (GlcNAc...) asparagine glycosylation is present at N131. 3 cysteine pairs are disulfide-bonded: C152/C217, C195/C246, and C205/C248.

Belongs to the NGF-beta family. As to expression, in the embryo, the expression peak at E4.5 and decreases at later stages of development.

It localises to the secreted. Its function is as follows. Seems to promote the survival of visceral and proprioceptive sensory neurons. This Gallus gallus (Chicken) protein is Neurotrophin-3 (NTF3).